Reading from the N-terminus, the 101-residue chain is NAD(P)H-quinone oxidoreductase subunit 4L, chloroplastic (101 aa).

3 helical membrane-spanning segments follow: residues 2 to 22 (MLEH…YGLI), 32 to 52 (MCLE…SDFF), and 61 to 81 (ILSI…LAIV).

Belongs to the complex I subunit 4L family. In terms of assembly, NDH is composed of at least 16 different subunits, 5 of which are encoded in the nucleus.

It localises to the plastid. The protein resides in the chloroplast thylakoid membrane. It catalyses the reaction a plastoquinone + NADH + (n+1) H(+)(in) = a plastoquinol + NAD(+) + n H(+)(out). The enzyme catalyses a plastoquinone + NADPH + (n+1) H(+)(in) = a plastoquinol + NADP(+) + n H(+)(out). In terms of biological role, NDH shuttles electrons from NAD(P)H:plastoquinone, via FMN and iron-sulfur (Fe-S) centers, to quinones in the photosynthetic chain and possibly in a chloroplast respiratory chain. The immediate electron acceptor for the enzyme in this species is believed to be plastoquinone. Couples the redox reaction to proton translocation, and thus conserves the redox energy in a proton gradient. This chain is NAD(P)H-quinone oxidoreductase subunit 4L, chloroplastic, found in Buxus microphylla (Littleleaf boxwood).